The sequence spans 178 residues: PRA1 family protein 2 (178 aa).

The Cytoplasmic segment spans residues 1 to 41 (MSEVRLPPLRALDDFVLGSARLAAPDPCDPQRWCHRVINNL). A helical transmembrane segment spans residues 42–62 (LYYQTNYLLCFGIGLALAGYV). The Extracellular segment spans residues 63 to 64 (RP). A helical transmembrane segment spans residues 65 to 85 (LHTLLSALVVAVALGVLVWAA). Topologically, residues 86–96 (ETRAAVRRCRR) are cytoplasmic. The helical transmembrane segment at 97 to 119 (SHPAACLAAVLAVGLLVLWVAGG) threads the bilayer. The Extracellular portion of the chain corresponds to 120–122 (ACT). A helical transmembrane segment spans residues 123–140 (FLFSIAGPVLLILVHASL). Over 141–178 (RLRNLKNKIENKIESIGLKRTPMGLLLEALGQEQEAGS) the chain is Cytoplasmic.

The protein belongs to the PRA1 family. In terms of assembly, interacts with CCR5 and GDE1. As to expression, strong expression in the brain, small intestine, lung, spleen, and pancreas as well as in tumor tissues of the breast, colon, lung and ovary, with a weaker expression in normal tissues of the same patient. High expression in neuroblastic tumors. Strongly expressed in Purkinje cells and more moderately in cells of the molecular and the granular layers in the cerebellum. Detected in neuronal cells, but not in non-neuronal cells in the cerebral cortex, hippocampus, and lateral ventricles.

Its subcellular location is the endosome membrane. May be involved in ER/Golgi transport and vesicular traffic. Plays a proapoptotic role in cerulenin-induced neuroblastoma apoptosis. This Homo sapiens (Human) protein is PRA1 family protein 2 (PRAF2).